We begin with the raw amino-acid sequence, 734 residues long: Photosystem I P700 chlorophyll a apoprotein A2 (734 aa).

8 helical membrane-spanning segments follow: residues 46–69 (IFAS…FHVA), 135–158 (LYTG…LHLQ), 175–199 (LNHH…HVAI), 273–291 (IAHH…GHMY), 330–353 (IHFQ…QHMY), 369–395 (AALY…IFFI), 417–439 (AIKS…LYVH), and 517–535 (FLVH…LILV). Positions 559 and 568 each coordinate [4Fe-4S] cluster. Helical transmembrane passes span 575–596 (AFYL…YWHW) and 643–665 (LSVW…MFLI). The chlorophyll a site is built by His654, Met662, and Tyr670. Trp671 contacts phylloquinone. Residues 707-727 (LVGLAHFSVGYIFTYAAFLIA) traverse the membrane as a helical segment.

Belongs to the PsaA/PsaB family. In terms of assembly, the PsaA/B heterodimer binds the P700 chlorophyll special pair and subsequent electron acceptors. PSI consists of a core antenna complex that captures photons, and an electron transfer chain that converts photonic excitation into a charge separation. The eukaryotic PSI reaction center is composed of at least 11 subunits. It depends on P700 is a chlorophyll a/chlorophyll a' dimer, A0 is one or more chlorophyll a, A1 is one or both phylloquinones and FX is a shared 4Fe-4S iron-sulfur center. as a cofactor.

It is found in the plastid. It localises to the chloroplast thylakoid membrane. The catalysed reaction is reduced [plastocyanin] + hnu + oxidized [2Fe-2S]-[ferredoxin] = oxidized [plastocyanin] + reduced [2Fe-2S]-[ferredoxin]. Its function is as follows. PsaA and PsaB bind P700, the primary electron donor of photosystem I (PSI), as well as the electron acceptors A0, A1 and FX. PSI is a plastocyanin-ferredoxin oxidoreductase, converting photonic excitation into a charge separation, which transfers an electron from the donor P700 chlorophyll pair to the spectroscopically characterized acceptors A0, A1, FX, FA and FB in turn. Oxidized P700 is reduced on the lumenal side of the thylakoid membrane by plastocyanin. The chain is Photosystem I P700 chlorophyll a apoprotein A2 from Illicium oligandrum (Star anise).